Consider the following 80-residue polypeptide: Defensin-like protein 276 (80 aa).

Residues 1 to 24 (MSGQKYQLVSLLLIICLLFSQSTA) form the signal peptide. Intrachain disulfides connect Cys27/Cys67, Cys33/Cys55, Cys39/Cys65, and Cys43/Cys66.

It belongs to the DEFL family.

The protein localises to the secreted. This Arabidopsis thaliana (Mouse-ear cress) protein is Defensin-like protein 276.